A 153-amino-acid chain; its full sequence is Cytochrome c-type biogenesis protein CcmE (153 aa).

Over Met1–Arg6 the chain is Cytoplasmic. Residues Leu7–Ala27 traverse the membrane as a helical; Signal-anchor for type II membrane protein segment. Topologically, residues Leu28–Pro153 are periplasmic. The heme site is built by His121 and Tyr125. The span at Ala131–His141 shows a compositional bias: polar residues. The interval Ala131–Pro153 is disordered.

It belongs to the CcmE/CycJ family.

The protein localises to the cell inner membrane. In terms of biological role, heme chaperone required for the biogenesis of c-type cytochromes. Transiently binds heme delivered by CcmC and transfers the heme to apo-cytochromes in a process facilitated by CcmF and CcmH. In Xylella fastidiosa (strain Temecula1 / ATCC 700964), this protein is Cytochrome c-type biogenesis protein CcmE.